A 123-amino-acid polypeptide reads, in one-letter code: Protein Wnt-3a (123 aa).

Ser1 is lipidated: O-palmitoleoyl serine. Cysteines 89 and 104 form a disulfide. Asn90 carries N-linked (GlcNAc...) asparagine glycosylation.

Belongs to the Wnt family. Disulfide bonds have critical and distinct roles in secretion and activity. Loss of each conserved cysteine results in high molecular weight oxidized Wnt oligomers, which are formed through inter-Wnt disulfide bonding. In terms of processing, palmitoleoylation is required for efficient binding to frizzled receptors. Depalmitoleoylation leads to Wnt signaling pathway inhibition.

It is found in the secreted. Its subcellular location is the extracellular space. It localises to the extracellular matrix. Functionally, ligand for members of the frizzled family of seven transmembrane receptors. Functions in the canonical Wnt signaling pathway that results in activation of transcription factors of the TCF/LEF family. Required for normal embryonic mesoderm development and formation of caudal somites. Required for normal morphogenesis of the developing neural tube. The polypeptide is Protein Wnt-3a (WNT-3A) (Pituophis melanoleucus (Pine snake)).